The primary structure comprises 86 residues: YcgL domain-containing protein IL1825 (86 aa).

The YcgL domain maps to 1–85; it reads MLCDVYRSSK…KREELQVNVN (85 aa).

The polypeptide is YcgL domain-containing protein IL1825 (Idiomarina loihiensis (strain ATCC BAA-735 / DSM 15497 / L2-TR)).